A 326-amino-acid polypeptide reads, in one-letter code: MAVYTDITEDELIRFLAAYEVGSLTSYKGIAEGVENSNFLLHTTRGAYILTLYEKRVNADDLPFFLGLMHHLAQRGLSCPLPLPRADGKLLGTLSGRPAAVISFLEGMWLRKPEAQHCREVGRALALMHQASEGFRLKRPNALSVEGWRPLWRNSEARADEVQAGLKDEIATELAFLEEHWPRALPEGVIHADLFPDNVFFLGDRLSGLIDFYFACNDFLAYDIAICLNSWCFEKDGSYNITKGMALLSGYESVRNLTAEEVEALPLLARGSALRFFLTRLYDWLTTPPGALVVKKDPLEYLTKIRFHRAIVSSAEYGLRREEASA.

It belongs to the pseudomonas-type ThrB family.

The enzyme catalyses L-homoserine + ATP = O-phospho-L-homoserine + ADP + H(+). Its pathway is amino-acid biosynthesis; L-threonine biosynthesis; L-threonine from L-aspartate: step 4/5. The polypeptide is Homoserine kinase (Sinorhizobium medicae (strain WSM419) (Ensifer medicae)).